The chain runs to 320 residues: Transaldolase (320 aa).

The active-site Schiff-base intermediate with substrate is the Lys-126.

This sequence belongs to the transaldolase family. Type 1 subfamily. As to quaternary structure, homodimer.

It localises to the cytoplasm. The enzyme catalyses D-sedoheptulose 7-phosphate + D-glyceraldehyde 3-phosphate = D-erythrose 4-phosphate + beta-D-fructose 6-phosphate. It functions in the pathway carbohydrate degradation; pentose phosphate pathway; D-glyceraldehyde 3-phosphate and beta-D-fructose 6-phosphate from D-ribose 5-phosphate and D-xylulose 5-phosphate (non-oxidative stage): step 2/3. Transaldolase is important for the balance of metabolites in the pentose-phosphate pathway. This is Transaldolase from Bordetella bronchiseptica (strain ATCC BAA-588 / NCTC 13252 / RB50) (Alcaligenes bronchisepticus).